Here is a 171-residue protein sequence, read N- to C-terminus: Large ribosomal subunit protein bL17 (171 aa).

A compositionally biased stretch (basic and acidic residues) spans 140–152; sequence KREIQTKAREEKR. The segment at 140 to 171 is disordered; that stretch reads KREIQTKAREEKRATRKSNSAPVNKETTSKKK. Polar residues predominate over residues 156–165; sequence KSNSAPVNKE.

It belongs to the bacterial ribosomal protein bL17 family. In terms of assembly, part of the 50S ribosomal subunit. Contacts protein L32.

The chain is Large ribosomal subunit protein bL17 from Leptospira interrogans serogroup Icterohaemorrhagiae serovar Lai (strain 56601).